The following is a 537-amino-acid chain: Glutamyl-tRNA(Gln) amidotransferase subunit A, chloroplastic/mitochondrial (537 aa).

Active-site charge relay system residues include K116 and S191. S215 functions as the Acyl-ester intermediate in the catalytic mechanism.

Belongs to the amidase family. GatA subfamily. As to quaternary structure, subunit of the heterotrimeric GatCAB amidotransferase (AdT) complex, composed of A, B and C subunits.

It localises to the mitochondrion. The protein resides in the plastid. The protein localises to the chloroplast stroma. It carries out the reaction L-glutamyl-tRNA(Gln) + L-glutamine + ATP + H2O = L-glutaminyl-tRNA(Gln) + L-glutamate + ADP + phosphate + H(+). Allows the formation of correctly charged Gln-tRNA(Gln) through the transamidation of misacylated Glu-tRNA(Gln) in chloroplasts and mitochondria. The reaction takes place in the presence of glutamine and ATP through an activated gamma-phospho-Glu-tRNA(Gln). This Arabidopsis thaliana (Mouse-ear cress) protein is Glutamyl-tRNA(Gln) amidotransferase subunit A, chloroplastic/mitochondrial.